The sequence spans 467 residues: Gamma-aminobutyric acid receptor subunit rho-3 (467 aa).

A signal peptide spans 1-24 (MVLAFQLVSFTYIWIILKPNVCAA). Residues 25-266 (SNIKMTHQRC…LFINFVLRRH (242 aa)) are Extracellular-facing. 4-aminobutanoate contacts are provided by Arg111 and Ser175. A disulfide bond links Cys184 and Cys198. Glu203 contacts 4-aminobutanoate. N-linked (GlcNAc...) asparagine glycosylation is present at Asn220. The helical transmembrane segment at 267–287 (VFFFVLQTYFPAILMVMLSWV) threads the bilayer. Residues 288–299 (SFWIDRRAVPAR) are Cytoplasmic-facing. Residues 300–320 (VSLGITTVLTMSTIITAVSAS) traverse the membrane as a helical segment. The Extracellular portion of the chain corresponds to 321-331 (MPQVSYLKAVD). Residues 332 to 352 (VYLWVSSLFVFLSVIEYAAVN) traverse the membrane as a helical segment. Residues 347 to 448 (EYAAVNYLTT…NNHVIDTYSR (102 aa)) form an interaction with SQSTM1 region. Residues 353–446 (YLTTVEERKQ…LENNHVIDTY (94 aa)) are Cytoplasmic-facing. A helical membrane pass occupies residues 447 to 467 (SRILFPIVYILFNLFYWGVYV).

This sequence belongs to the ligand-gated ion channel (TC 1.A.9) family. Gamma-aminobutyric acid receptor (TC 1.A.9.5) subfamily. GABRR3 sub-subfamily. Three rho subunits (rho-1/GBRR1, rho-2/GBRR2 and rho-3/GBRR3) coassemble either to form functional homopentamers or heteropentamers. Forms a ternary complex with SQSTM1 and PRKCZ.

It localises to the postsynaptic cell membrane. It is found in the cell membrane. The catalysed reaction is chloride(in) = chloride(out). Its activity is regulated as follows. Inhibited by TPMPA, a rho-specific antagonist, when forming a homopentamer. Its function is as follows. Rho subunit of the pentameric ligand-gated chloride channels responsible for mediating the effects of gamma-aminobutyric acid (GABA), the major inhibitory neurotransmitter in the brain. Rho-containing GABA-gated chloride channels are a subclass of GABA(A) receptors (GABAARs) entirely composed of rho subunits, where GABA molecules bind at the rho intersubunit interfaces. When activated by GABA, rho-GABAARs selectively allow the flow of chloride anions across the cell membrane down their electrochemical gradient. This Homo sapiens (Human) protein is Gamma-aminobutyric acid receptor subunit rho-3.